The primary structure comprises 189 residues: Ribonuclease HII (189 aa).

The region spanning 1 to 189 (MIAGVDEAGR…PVRRALNIDC (189 aa)) is the RNase H type-2 domain. Positions 6, 7, and 98 each coordinate a divalent metal cation.

This sequence belongs to the RNase HII family. It depends on Mn(2+) as a cofactor. Requires Mg(2+) as cofactor.

Its subcellular location is the cytoplasm. It carries out the reaction Endonucleolytic cleavage to 5'-phosphomonoester.. Functionally, endonuclease that specifically degrades the RNA of RNA-DNA hybrids. This Acinetobacter baylyi (strain ATCC 33305 / BD413 / ADP1) protein is Ribonuclease HII.